A 195-amino-acid polypeptide reads, in one-letter code: Nicotinamide riboside kinase 1 (195 aa).

An ATP-binding site is contributed by 10 to 18 (GVTNGGKTT). Mg(2+) is bound by residues Thr-17 and Asp-36. Catalysis depends on Asp-36, which acts as the Proton acceptor. Residues 36 to 39 (DDFF) and 55 to 56 (YD) each bind substrate. Arg-128 provides a ligand contact to ATP. Substrate contacts are provided by residues Arg-129 and 134-135 (YE). ATP-binding positions include 132 to 134 (RVY) and 172 to 174 (RSE).

The protein belongs to the uridine kinase family. NRK subfamily. In terms of assembly, monomer.

It carries out the reaction beta-nicotinamide D-riboside + ATP = beta-nicotinamide D-ribonucleotide + ADP + H(+). The catalysed reaction is beta-D-ribosylnicotinate + ATP = nicotinate beta-D-ribonucleotide + ADP + H(+). It participates in cofactor biosynthesis; NAD(+) biosynthesis. Functionally, catalyzes the phosphorylation of nicotinamide riboside (NR) and nicotinic acid riboside (NaR) to form nicotinamide mononucleotide (NMN) and nicotinic acid mononucleotide (NaMN). This chain is Nicotinamide riboside kinase 1 (Nmrk1), found in Rattus norvegicus (Rat).